A 130-amino-acid polypeptide reads, in one-letter code: Ribonuclease P protein component 2 (130 aa).

This sequence belongs to the eukaryotic/archaeal RNase P protein component 2 family. Consists of a catalytic RNA component and at least 4-5 protein subunits.

Its subcellular location is the cytoplasm. The enzyme catalyses Endonucleolytic cleavage of RNA, removing 5'-extranucleotides from tRNA precursor.. In terms of biological role, part of ribonuclease P, a protein complex that generates mature tRNA molecules by cleaving their 5'-ends. This Methanococcus maripaludis (strain C6 / ATCC BAA-1332) protein is Ribonuclease P protein component 2.